The following is a 249-amino-acid chain: 2,3-bisphosphoglycerate-dependent phosphoglycerate mutase (249 aa).

Residues 8 to 15 (RHGESIWN), 21 to 22 (TG), Arg-60, 87 to 90 (ERHY), Lys-98, 114 to 115 (RR), and 183 to 184 (GN) contribute to the substrate site. His-9 acts as the Tele-phosphohistidine intermediate in catalysis. Glu-87 serves as the catalytic Proton donor/acceptor.

This sequence belongs to the phosphoglycerate mutase family. BPG-dependent PGAM subfamily.

It catalyses the reaction (2R)-2-phosphoglycerate = (2R)-3-phosphoglycerate. It participates in carbohydrate degradation; glycolysis; pyruvate from D-glyceraldehyde 3-phosphate: step 3/5. Its function is as follows. Catalyzes the interconversion of 2-phosphoglycerate and 3-phosphoglycerate. The sequence is that of 2,3-bisphosphoglycerate-dependent phosphoglycerate mutase from Caldanaerobacter subterraneus subsp. tengcongensis (strain DSM 15242 / JCM 11007 / NBRC 100824 / MB4) (Thermoanaerobacter tengcongensis).